Here is a 635-residue protein sequence, read N- to C-terminus: Threonine--tRNA ligase (635 aa).

A TGS domain is found at 1-61 (MVSIRLPDGS…DRDASLAIVT (61 aa)). The segment at 242 to 533 (DHRKLGKQLD…LIEHHAGAMP (292 aa)) is catalytic. C333, H384, and H510 together coordinate Zn(2+).

It belongs to the class-II aminoacyl-tRNA synthetase family. In terms of assembly, homodimer. Requires Zn(2+) as cofactor.

The protein resides in the cytoplasm. It catalyses the reaction tRNA(Thr) + L-threonine + ATP = L-threonyl-tRNA(Thr) + AMP + diphosphate + H(+). Its function is as follows. Catalyzes the attachment of threonine to tRNA(Thr) in a two-step reaction: L-threonine is first activated by ATP to form Thr-AMP and then transferred to the acceptor end of tRNA(Thr). Also edits incorrectly charged L-seryl-tRNA(Thr). The polypeptide is Threonine--tRNA ligase (Burkholderia orbicola (strain MC0-3)).